An 89-amino-acid chain; its full sequence is MALTSEQKKNVISRYKLHDNDTGSPEVQVAILTERINSLTEHLKLHKGDHHSRRGLLKMVGQRRALLNYLRDRHYERYRALIDKLGLRK.

This sequence belongs to the universal ribosomal protein uS15 family. Part of the 30S ribosomal subunit. Forms a bridge to the 50S subunit in the 70S ribosome, contacting the 23S rRNA.

In terms of biological role, one of the primary rRNA binding proteins, it binds directly to 16S rRNA where it helps nucleate assembly of the platform of the 30S subunit by binding and bridging several RNA helices of the 16S rRNA. Its function is as follows. Forms an intersubunit bridge (bridge B4) with the 23S rRNA of the 50S subunit in the ribosome. The chain is Small ribosomal subunit protein uS15 from Pelotomaculum thermopropionicum (strain DSM 13744 / JCM 10971 / SI).